Here is a 224-residue protein sequence, read N- to C-terminus: Flagellar L-ring protein (224 aa).

Positions Met-1–Ala-15 are cleaved as a signal peptide. Residue Cys-16 is the site of N-palmitoyl cysteine attachment. Cys-16 is lipidated: S-diacylglycerol cysteine.

Belongs to the FlgH family. As to quaternary structure, the basal body constitutes a major portion of the flagellar organelle and consists of four rings (L,P,S, and M) mounted on a central rod.

The protein resides in the cell outer membrane. The protein localises to the bacterial flagellum basal body. In terms of biological role, assembles around the rod to form the L-ring and probably protects the motor/basal body from shearing forces during rotation. This Shewanella baltica (strain OS185) protein is Flagellar L-ring protein.